A 202-amino-acid polypeptide reads, in one-letter code: Small ribosomal subunit protein uS5 (202 aa).

The region spanning 42–105 (LKDEVLKIMP…ILAKLSIVPV (64 aa)) is the S5 DRBM domain. Thr192 is subject to Phosphothreonine.

The protein belongs to the universal ribosomal protein uS5 family. Component of the small ribosomal subunit. Interacts with zinc finger protein ZNF277 (via zinc-finger domains); the interaction is direct; the interaction is extra-ribosomal. Interaction with ZNF277 competes with the binding of RPS2 to protein arginine methyltransferase PRMT3. Post-translationally, citrullinated by PADI4 in the Arg/Gly-rich region. In terms of processing, asymmetric arginine dimethylation by PRMT3 occurs at multiple sites in the Arg/Gly-rich region. Monoubiquitinated by RNF10 when a ribosome has stalled during translation, leading to its degradation by the proteasome. Deubiquitinated by USP10, preventing degradation by the proteasome and promoting 40S ribosome subunit recycling following ribosome dissociation.

The protein localises to the cytoplasm. The protein resides in the nucleus. Its subcellular location is the nucleolus. Component of the ribosome, a large ribonucleoprotein complex responsible for the synthesis of proteins in the cell. The small ribosomal subunit (SSU) binds messenger RNAs (mRNAs) and translates the encoded message by selecting cognate aminoacyl-transfer RNA (tRNA) molecules. The large subunit (LSU) contains the ribosomal catalytic site termed the peptidyl transferase center (PTC), which catalyzes the formation of peptide bonds, thereby polymerizing the amino acids delivered by tRNAs into a polypeptide chain. The nascent polypeptides leave the ribosome through a tunnel in the LSU and interact with protein factors that function in enzymatic processing, targeting, and the membrane insertion of nascent chains at the exit of the ribosomal tunnel. Plays a role in the assembly and function of the 40S ribosomal subunit. Mutations in this protein affects the control of translational fidelity. Involved in nucleolar processing of pre-18S ribosomal RNA and ribosome assembly. The polypeptide is Small ribosomal subunit protein uS5 (RPS2) (Cricetulus griseus (Chinese hamster)).